Here is a 474-residue protein sequence, read N- to C-terminus: Protein nucleotidyltransferase YdiU (474 aa).

The ATP site is built by glycine 89, glycine 91, arginine 92, lysine 112, aspartate 124, glycine 125, arginine 178, and arginine 185. The active-site Proton acceptor is aspartate 262. Positions 263 and 272 each coordinate Mg(2+). An ATP-binding site is contributed by aspartate 272.

The protein belongs to the SELO family. Mg(2+) serves as cofactor. Mn(2+) is required as a cofactor.

It catalyses the reaction L-seryl-[protein] + ATP = 3-O-(5'-adenylyl)-L-seryl-[protein] + diphosphate. It carries out the reaction L-threonyl-[protein] + ATP = 3-O-(5'-adenylyl)-L-threonyl-[protein] + diphosphate. The enzyme catalyses L-tyrosyl-[protein] + ATP = O-(5'-adenylyl)-L-tyrosyl-[protein] + diphosphate. The catalysed reaction is L-histidyl-[protein] + UTP = N(tele)-(5'-uridylyl)-L-histidyl-[protein] + diphosphate. It catalyses the reaction L-seryl-[protein] + UTP = O-(5'-uridylyl)-L-seryl-[protein] + diphosphate. It carries out the reaction L-tyrosyl-[protein] + UTP = O-(5'-uridylyl)-L-tyrosyl-[protein] + diphosphate. In terms of biological role, nucleotidyltransferase involved in the post-translational modification of proteins. It can catalyze the addition of adenosine monophosphate (AMP) or uridine monophosphate (UMP) to a protein, resulting in modifications known as AMPylation and UMPylation. The sequence is that of Protein nucleotidyltransferase YdiU from Trichodesmium erythraeum (strain IMS101).